Consider the following 366-residue polypeptide: Chaperone protein DnaJ (366 aa).

One can recognise a J domain in the interval 5 to 69 (DYYEVLGVSK…QKRAQYDQFG (65 aa)). The CR-type zinc finger occupies 128 to 210 (GKELNVEIPV…CHGTGKVRKR (83 aa)). Positions 141, 144, 158, 161, 184, 187, 198, and 201 each coordinate Zn(2+). CXXCXGXG motif repeat units follow at residues 141–148 (CDTCHGSG), 158–165 (CKYCSGTG), 184–191 (CRHCSGTG), and 198–205 (CTTCHGTG).

The protein belongs to the DnaJ family. Homodimer. Zn(2+) serves as cofactor.

The protein localises to the cytoplasm. Functionally, participates actively in the response to hyperosmotic and heat shock by preventing the aggregation of stress-denatured proteins and by disaggregating proteins, also in an autonomous, DnaK-independent fashion. Unfolded proteins bind initially to DnaJ; upon interaction with the DnaJ-bound protein, DnaK hydrolyzes its bound ATP, resulting in the formation of a stable complex. GrpE releases ADP from DnaK; ATP binding to DnaK triggers the release of the substrate protein, thus completing the reaction cycle. Several rounds of ATP-dependent interactions between DnaJ, DnaK and GrpE are required for fully efficient folding. Also involved, together with DnaK and GrpE, in the DNA replication of plasmids through activation of initiation proteins. This Bacillus cytotoxicus (strain DSM 22905 / CIP 110041 / 391-98 / NVH 391-98) protein is Chaperone protein DnaJ.